Reading from the N-terminus, the 605-residue chain is NADH-ubiquinone oxidoreductase chain 5 (605 aa).

Helical transmembrane passes span 8-28, 34-54, 87-107, 117-137, 140-160, 171-191, 241-261, 273-293, 301-321, 324-344, 366-386, 409-429, 457-477, 482-502, and 584-604; these read TLLS…YPYT, IYVK…TMIF, MILM…SMWY, FFKY…ANNL, LFIG…WWYG, AILY…WFLF, TPVS…FLLI, IQTM…ICAL, IVAF…GINQ, LAFL…LCSG, LPFT…MPFL, LFIT…IIYF, LLVG…PTTI, MPTY…IVAL, and IKLY…MLNF.

Belongs to the complex I subunit 5 family. In terms of assembly, core subunit of respiratory chain NADH dehydrogenase (Complex I) which is composed of 45 different subunits.

It localises to the mitochondrion inner membrane. It carries out the reaction a ubiquinone + NADH + 5 H(+)(in) = a ubiquinol + NAD(+) + 4 H(+)(out). In terms of biological role, core subunit of the mitochondrial membrane respiratory chain NADH dehydrogenase (Complex I) which catalyzes electron transfer from NADH through the respiratory chain, using ubiquinone as an electron acceptor. Essential for the catalytic activity and assembly of complex I. This is NADH-ubiquinone oxidoreductase chain 5 (MT-ND5) from Rousettus amplexicaudatus (Common rousette).